The following is a 373-amino-acid chain: Putative C-P lyase subunit protein HtxH (373 aa).

It belongs to the PhnI family.

Its function is as follows. Belongs to an operon involved in hypophosphite oxidation. Exact function not known. The chain is Putative C-P lyase subunit protein HtxH (htxH) from Stutzerimonas stutzeri (Pseudomonas stutzeri).